A 455-amino-acid polypeptide reads, in one-letter code: Ribosome biogenesis protein NOP53 (455 aa).

The span at 1-15 shows a compositional bias: polar residues; sequence MAPTNLTKKPSQYKQ. A disordered region spans residues 1–25; that stretch reads MAPTNLTKKPSQYKQSSRKGKKAWR. Over residues 16–25 the composition is skewed to basic residues; sequence SSRKGKKAWR. The residue at position 31 (S31) is a Phosphoserine. The interval 264-333 is disordered; it reads HLMETLDDNE…RNKAKRHEEK (70 aa). Positions 268–294 are enriched in acidic residues; that stretch reads TLDDNEEEESSSNEEEEEEEEENENEN. Residues 314 to 328 are compositionally biased toward basic residues; that stretch reads VKNKKKTKYQRNKAK.

Belongs to the NOP53 family. As to quaternary structure, interacts with CBF5, FPR3, FPR4, NOP2, PIH1, RRN3, RRP6 and PAP2. Interacts with pre-60S ribosomal particles.

The protein resides in the nucleus. It localises to the nucleolus. It is found in the nucleoplasm. Late-acting factor in the nuclear maturation of 60S ribosomal subunits, which is required for normal acquisition of export competence. Required for the export of the large subunit. Acts to stimulate the RNase activity of the exosome complex, and may recruit the exosome to 7S pre-rRNA for processing. Associates with numerous RNAs including the 27S and 7S pre-rRNAs and the box H/ACA snoRNA snR37. Also interacts (via N-terminal region) with the mature 25S rRNA and the mature 5.8S rRNA. The polypeptide is Ribosome biogenesis protein NOP53 (Saccharomyces cerevisiae (strain ATCC 204508 / S288c) (Baker's yeast)).